We begin with the raw amino-acid sequence, 268 residues long: Glutamate racemase (268 aa).

Residues Asp-10–Ser-11 and Tyr-42–Gly-43 each bind substrate. Cys-73 functions as the Proton donor/acceptor in the catalytic mechanism. Asn-74–Thr-75 serves as a coordination point for substrate. Cys-184 functions as the Proton donor/acceptor in the catalytic mechanism. Thr-185–His-186 lines the substrate pocket.

The protein belongs to the aspartate/glutamate racemases family.

The catalysed reaction is L-glutamate = D-glutamate. Its pathway is cell wall biogenesis; peptidoglycan biosynthesis. Functionally, provides the (R)-glutamate required for cell wall biosynthesis. This chain is Glutamate racemase, found in Carnobacterium sp. (strain St2).